Here is a 161-residue protein sequence, read N- to C-terminus: Ribonuclease P protein component (161 aa).

The protein belongs to the RnpA family. Consists of a catalytic RNA component (M1 or rnpB) and a protein subunit.

The enzyme catalyses Endonucleolytic cleavage of RNA, removing 5'-extranucleotides from tRNA precursor.. RNaseP catalyzes the removal of the 5'-leader sequence from pre-tRNA to produce the mature 5'-terminus. It can also cleave other RNA substrates such as 4.5S RNA. The protein component plays an auxiliary but essential role in vivo by binding to the 5'-leader sequence and broadening the substrate specificity of the ribozyme. This is Ribonuclease P protein component from Helicobacter pylori (strain Shi470).